Reading from the N-terminus, the 304-residue chain is Mycothiol acetyltransferase (304 aa).

Position 36 (Glu36) interacts with 1D-myo-inositol 2-(L-cysteinylamino)-2-deoxy-alpha-D-glucopyranoside. Residue 73 to 75 (LFV) participates in acetyl-CoA binding. Positions 145–304 (LEIQTYTESV…EEHCVWAKSD (160 aa)) constitute an N-acetyltransferase domain. 1D-myo-inositol 2-(L-cysteinylamino)-2-deoxy-alpha-D-glucopyranoside is bound by residues Glu179, Lys225, and Glu236. 240–242 (VGL) lines the acetyl-CoA pocket. Position 274 (Tyr274) interacts with 1D-myo-inositol 2-(L-cysteinylamino)-2-deoxy-alpha-D-glucopyranoside. 279–284 (NDPAVK) contacts acetyl-CoA.

The protein belongs to the acetyltransferase family. MshD subfamily. As to quaternary structure, monomer.

The enzyme catalyses 1D-myo-inositol 2-(L-cysteinylamino)-2-deoxy-alpha-D-glucopyranoside + acetyl-CoA = mycothiol + CoA + H(+). In terms of biological role, catalyzes the transfer of acetyl from acetyl-CoA to desacetylmycothiol (Cys-GlcN-Ins) to form mycothiol. The sequence is that of Mycothiol acetyltransferase from Corynebacterium aurimucosum (strain ATCC 700975 / DSM 44827 / CIP 107346 / CN-1) (Corynebacterium nigricans).